The following is a 441-amino-acid chain: Plasmepsin VI (441 aa).

Residues 1-7 (MTNFCIK) are Cytoplasmic-facing. The chain crosses the membrane as a helical; Signal-anchor for type II membrane protein span at residues 8 to 28 (SYLFLYLSFLLFFDIITIFHV). Topologically, residues 29 to 441 (SSIRISTVLK…VGVVKSNHNF (413 aa)) are extracellular. The Peptidase A1 domain occupies 109–435 (FIGDIEIGNP…DNDHKLVGVV (327 aa)). Active-site residues include Asp127 and Asp324.

This sequence belongs to the peptidase A1 family.

It is found in the membrane. In terms of biological role, during the development in the mosquito midgut, plays a role in sporozoite egress from oocysts. The protein is Plasmepsin VI of Plasmodium berghei (strain Anka).